The following is a 300-amino-acid chain: Geranylgeranyl pyrophosphate synthase (300 aa).

The residue at position 1 (Met-1) is an N-acetylmethionine. Positions 25, 28, and 57 each coordinate isopentenyl diphosphate. Residues Asp-64 and Asp-68 each contribute to the Mg(2+) site. Arg-73 provides a ligand contact to dimethylallyl diphosphate. Arg-74 serves as a coordination point for isopentenyl diphosphate. Lys-151, Thr-152, Gln-185, Lys-202, and Lys-212 together coordinate dimethylallyl diphosphate.

It belongs to the FPP/GGPP synthase family. As to quaternary structure, homohexamer; trimer of homodimers. Mg(2+) serves as cofactor.

It is found in the cytoplasm. It localises to the perinuclear region. Its subcellular location is the myofibril. The protein localises to the sarcomere. The protein resides in the z line. The enzyme catalyses isopentenyl diphosphate + dimethylallyl diphosphate = (2E)-geranyl diphosphate + diphosphate. It catalyses the reaction isopentenyl diphosphate + (2E)-geranyl diphosphate = (2E,6E)-farnesyl diphosphate + diphosphate. It carries out the reaction isopentenyl diphosphate + (2E,6E)-farnesyl diphosphate = (2E,6E,10E)-geranylgeranyl diphosphate + diphosphate. Its pathway is isoprenoid biosynthesis; farnesyl diphosphate biosynthesis; farnesyl diphosphate from geranyl diphosphate and isopentenyl diphosphate: step 1/1. The protein operates within isoprenoid biosynthesis; geranyl diphosphate biosynthesis; geranyl diphosphate from dimethylallyl diphosphate and isopentenyl diphosphate: step 1/1. It participates in isoprenoid biosynthesis; geranylgeranyl diphosphate biosynthesis; geranylgeranyl diphosphate from farnesyl diphosphate and isopentenyl diphosphate: step 1/1. Catalyzes the trans-addition of the three molecules of isopentenyl diphosphate (IPP) onto dimethylallyl pyrophosphate (DMAPP) to form geranylgeranyl pyrophosphate, an important precursor of carotenoids and geranylated proteins. This chain is Geranylgeranyl pyrophosphate synthase, found in Mus musculus (Mouse).